We begin with the raw amino-acid sequence, 381 residues long: Dual-specificity RNA methyltransferase RlmN (381 aa).

Glutamate 96 acts as the Proton acceptor in catalysis. The 241-residue stretch at 102–342 folds into the Radical SAM core domain; that stretch reads TDDRGTLCVS…TRTTRGDDID (241 aa). Cysteine 109 and cysteine 345 are joined by a disulfide. Cysteine 116, cysteine 120, and cysteine 123 together coordinate [4Fe-4S] cluster. S-adenosyl-L-methionine is bound by residues 170–171, serine 202, 224–226, and asparagine 302; these read GE and SLH. Residue cysteine 345 is the S-methylcysteine intermediate of the active site.

Belongs to the radical SAM superfamily. RlmN family. It depends on [4Fe-4S] cluster as a cofactor.

It is found in the cytoplasm. It carries out the reaction adenosine(2503) in 23S rRNA + 2 reduced [2Fe-2S]-[ferredoxin] + 2 S-adenosyl-L-methionine = 2-methyladenosine(2503) in 23S rRNA + 5'-deoxyadenosine + L-methionine + 2 oxidized [2Fe-2S]-[ferredoxin] + S-adenosyl-L-homocysteine. The enzyme catalyses adenosine(37) in tRNA + 2 reduced [2Fe-2S]-[ferredoxin] + 2 S-adenosyl-L-methionine = 2-methyladenosine(37) in tRNA + 5'-deoxyadenosine + L-methionine + 2 oxidized [2Fe-2S]-[ferredoxin] + S-adenosyl-L-homocysteine. Functionally, specifically methylates position 2 of adenine 2503 in 23S rRNA and position 2 of adenine 37 in tRNAs. m2A2503 modification seems to play a crucial role in the proofreading step occurring at the peptidyl transferase center and thus would serve to optimize ribosomal fidelity. The polypeptide is Dual-specificity RNA methyltransferase RlmN (Pseudomonas putida (strain ATCC 700007 / DSM 6899 / JCM 31910 / BCRC 17059 / LMG 24140 / F1)).